The primary structure comprises 203 residues: Ribosomal RNA small subunit methyltransferase G (203 aa).

S-adenosyl-L-methionine contacts are provided by residues G75, L80, 126–127 (VE), and R141.

This sequence belongs to the methyltransferase superfamily. RNA methyltransferase RsmG family.

The protein localises to the cytoplasm. It catalyses the reaction guanosine(527) in 16S rRNA + S-adenosyl-L-methionine = N(7)-methylguanosine(527) in 16S rRNA + S-adenosyl-L-homocysteine. In terms of biological role, specifically methylates the N7 position of guanine in position 527 of 16S rRNA. The sequence is that of Ribosomal RNA small subunit methyltransferase G from Ruthia magnifica subsp. Calyptogena magnifica.